The following is a 261-amino-acid chain: uncharacterized protein (261 aa).

The first 22 residues, 1 to 22 (MRYLKKVTIYISLLILTIFIGG), serve as a signal peptide directing secretion. Residue C23 is the site of N-palmitoyl cysteine attachment. A lipid anchor (S-diacylglycerol cysteine) is attached at C23.

This sequence belongs to the staphylococcal tandem lipoprotein family.

It localises to the cell membrane. This is an uncharacterized protein from Staphylococcus epidermidis (strain ATCC 35984 / DSM 28319 / BCRC 17069 / CCUG 31568 / BM 3577 / RP62A).